A 327-amino-acid polypeptide reads, in one-letter code: 4-diphosphocytidyl-2-C-methyl-D-erythritol kinase (327 aa).

The active site involves Lys-14. 97-107 is a binding site for ATP; the sequence is PDGAGLGGGSA. Residue Asp-140 is part of the active site.

It belongs to the GHMP kinase family. IspE subfamily.

The enzyme catalyses 4-CDP-2-C-methyl-D-erythritol + ATP = 4-CDP-2-C-methyl-D-erythritol 2-phosphate + ADP + H(+). Its pathway is isoprenoid biosynthesis; isopentenyl diphosphate biosynthesis via DXP pathway; isopentenyl diphosphate from 1-deoxy-D-xylulose 5-phosphate: step 3/6. Catalyzes the phosphorylation of the position 2 hydroxy group of 4-diphosphocytidyl-2C-methyl-D-erythritol. The sequence is that of 4-diphosphocytidyl-2-C-methyl-D-erythritol kinase from Oleidesulfovibrio alaskensis (strain ATCC BAA-1058 / DSM 17464 / G20) (Desulfovibrio alaskensis).